The chain runs to 183 residues: uncharacterized protein (183 aa).

This sequence belongs to the asfivirus S183L family.

This is an uncharacterized protein from Ornithodoros (relapsing fever ticks).